The primary structure comprises 126 residues: B3 domain-containing protein At5g54067 (126 aa).

A DNA-binding region (TF-B3) is located at residues 20-118 (SDIVGNVVLP…KFVVLNFQYS (99 aa)).

The protein resides in the nucleus. The protein is B3 domain-containing protein At5g54067 of Arabidopsis thaliana (Mouse-ear cress).